We begin with the raw amino-acid sequence, 152 residues long: MLMNSVIALTFLTASSNNGGLNIDVQQEEEKRINNDLNQYDTTLFNKDSKAVNDAIVKQKKERQQQIKNDMFQNQASHSTRLNETKKVLFSKSNLEKTSESDKSPYIQNKQEKKIFPYILMSVGAFLTLGFVIFSIHKGRRTKNESARKSNI.

The Cytoplasmic segment spans residues 1–114 (MLMNSVIALT…PYIQNKQEKK (114 aa)). Residues 115 to 135 (IFPYILMSVGAFLTLGFVIFS) traverse the membrane as a helical segment. Over 136-152 (IHKGRRTKNESARKSNI) the chain is Extracellular.

The protein belongs to the EssA family.

It is found in the cell membrane. Its function is as follows. Component of the ESAT-6 secretion system (Ess). Required for the secretion of EsxA. This Staphylococcus aureus (strain MRSA252) protein is ESAT-6 secretion machinery protein EssA.